Reading from the N-terminus, the 219-residue chain is Large ribosomal subunit protein eL13 (219 aa).

Residues 198-219 form a disordered region; the sequence is KDAAENPDDVTKAPTAVKRNKT.

This sequence belongs to the eukaryotic ribosomal protein eL13 family. Component of the 60S large ribosomal subunit (LSU).

The protein localises to the cytoplasm. Its function is as follows. Component of the ribosome, a large ribonucleoprotein complex responsible for the synthesis of proteins in the cell. The small ribosomal subunit (SSU) binds messenger RNAs (mRNAs) and translates the encoded message by selecting cognate aminoacyl-transfer RNA (tRNA) molecules. The large subunit (LSU) contains the ribosomal catalytic site termed the peptidyl transferase center (PTC), which catalyzes the formation of peptide bonds, thereby polymerizing the amino acids delivered by tRNAs into a polypeptide chain. The nascent polypeptides leave the ribosome through a tunnel in the LSU and interact with protein factors that function in enzymatic processing, targeting, and the membrane insertion of nascent chains at the exit of the ribosomal tunnel. As part of the LSU, it is probably required for its formation and the maturation of rRNAs. The polypeptide is Large ribosomal subunit protein eL13 (RpL13) (Spodoptera frugiperda (Fall armyworm)).